Reading from the N-terminus, the 892-residue chain is DNA mismatch repair protein MutS (892 aa).

607-614 (GPNMSGKS) contacts ATP. Residues 826–854 (ETKAETEEESQLSFFGGEQSSKKQDKPVL) are disordered. Over residues 845–854 (SSKKQDKPVL) the composition is skewed to basic and acidic residues.

It belongs to the DNA mismatch repair MutS family.

In terms of biological role, this protein is involved in the repair of mismatches in DNA. It is possible that it carries out the mismatch recognition step. This protein has a weak ATPase activity. The sequence is that of DNA mismatch repair protein MutS from Bacillus cereus (strain AH187).